Reading from the N-terminus, the 291-residue chain is Protease HtpX (291 aa).

2 helical membrane passes run 4–24 (VLLF…VLSV) and 37–57 (GGLL…SLLM). Histidine 143 contacts Zn(2+). Glutamate 144 is a catalytic residue. A Zn(2+)-binding site is contributed by histidine 147. The next 2 helical transmembrane spans lie at 158 to 178 (LIQG…AGIV) and 198 to 218 (FAIS…IVMW). Position 224 (glutamate 224) interacts with Zn(2+).

It belongs to the peptidase M48B family. Zn(2+) serves as cofactor.

The protein localises to the cell inner membrane. This Tolumonas auensis (strain DSM 9187 / NBRC 110442 / TA 4) protein is Protease HtpX.